The primary structure comprises 161 residues: E3 ubiquitin ligase complex SCF subunit sconC (161 aa).

Residues 103 to 161 (ILAANYLDIKGLLDVGCKTVANMIKGKSPEEIRKTFNIQNDFTPEEEDQIRRENEWAEE) are interaction with the F-box domain of F-box proteins.

It belongs to the SKP1 family. In terms of assembly, component of the SCF (SKP1-CUL1-F-box protein) E3 ubiquitin ligase complexes.

Its pathway is protein modification; protein ubiquitination. Its function is as follows. Essential component of the SCF (SKP1-CUL1-F-box protein) E3 ubiquitin ligase complexes, which mediate the ubiquitination and subsequent proteasomal degradation of target proteins. Controls sulfur metabolite repression, probably by mediating the inactivation or degradation of the metR transcription factor. The polypeptide is E3 ubiquitin ligase complex SCF subunit sconC (sconC) (Aspergillus terreus (strain NIH 2624 / FGSC A1156)).